Here is a 545-residue protein sequence, read N- to C-terminus: Thermosome subunit (545 aa).

This sequence belongs to the TCP-1 chaperonin family. As to quaternary structure, forms an oligomeric complex of eight-membered rings.

Functionally, molecular chaperone; binds unfolded polypeptides in vitro, and has a weak ATPase activity. The polypeptide is Thermosome subunit (ths) (Methanopyrus kandleri (strain AV19 / DSM 6324 / JCM 9639 / NBRC 100938)).